Consider the following 448-residue polypeptide: tRNA modification GTPase MnmE (448 aa).

(6S)-5-formyl-5,6,7,8-tetrahydrofolate contacts are provided by Arg-24, Glu-81, and Lys-120. The TrmE-type G domain occupies 216–373; it reads GLNVVLVGAP…LKRTLLREAG (158 aa). Asn-226 contributes to the K(+) binding site. GTP is bound by residues 226–231, 245–251, and 270–273; these read NVGKSS, TDIAGTT, and DTAG. Mg(2+) is bound at residue Ser-230. 3 residues coordinate K(+): Thr-245, Ile-247, and Thr-250. Thr-251 serves as a coordination point for Mg(2+). Lys-448 lines the (6S)-5-formyl-5,6,7,8-tetrahydrofolate pocket.

Belongs to the TRAFAC class TrmE-Era-EngA-EngB-Septin-like GTPase superfamily. TrmE GTPase family. Homodimer. Heterotetramer of two MnmE and two MnmG subunits. The cofactor is K(+).

It localises to the cytoplasm. In terms of biological role, exhibits a very high intrinsic GTPase hydrolysis rate. Involved in the addition of a carboxymethylaminomethyl (cmnm) group at the wobble position (U34) of certain tRNAs, forming tRNA-cmnm(5)s(2)U34. This is tRNA modification GTPase MnmE from Neisseria meningitidis serogroup B (strain ATCC BAA-335 / MC58).